Reading from the N-terminus, the 411-residue chain is BRO1 domain-containing protein BROX (411 aa).

The region spanning 90–408 is the BRO1 domain; sequence FKWTDTLQGH…DIRPQKDTGC (319 aa). Basic and acidic residues predominate over residues 375–404; the sequence is LTKRPKDDSVKPKPEEDVKPVKEPDIRPQK. The interval 375–411 is disordered; sequence LTKRPKDDSVKPKPEEDVKPVKEPDIRPQKDTGCSVS. Position 408 is a cysteine methyl ester (cysteine 408). A lipid anchor (S-farnesyl cysteine) is attached at cysteine 408. The propeptide at 409–411 is removed in mature form; that stretch reads SVS.

The protein belongs to the BROX family. As to quaternary structure, monomer. Interacts with CHMP4B. Interacts with CHMP5: this interaction allows the recruitment of BROX to cellular membranes. Interacts with SYN2; this interaction promotes SYN2 ubiquitination and facilitates the relaxation of mechanical stress imposed by compressive actin fibers at the rupture site. In terms of processing, farnesylation is required for nuclear envelope localization.

Its subcellular location is the nucleus membrane. Functionally, nuclear envelope-associated factor that is involved in the nuclear envelope ruptures during interphase (NERDI) repair, where it is locally recruited by CHMP5 and reduces cytoskeletal stress through its action on SYN2 to help reseal the ruptured membrane. In Mus musculus (Mouse), this protein is BRO1 domain-containing protein BROX.